Reading from the N-terminus, the 60-residue chain is Large ribosomal subunit protein bL32 (60 aa).

Positions 1–21 are disordered; sequence MAVQQNKKSPSKRGMHRAHNA. The segment covering 9–19 has biased composition (basic residues); that stretch reads SPSKRGMHRAH.

This sequence belongs to the bacterial ribosomal protein bL32 family.

This Albidiferax ferrireducens (strain ATCC BAA-621 / DSM 15236 / T118) (Rhodoferax ferrireducens) protein is Large ribosomal subunit protein bL32.